The sequence spans 289 residues: Release factor glutamine methyltransferase (289 aa).

S-adenosyl-L-methionine is bound by residues 130-134 (GTGTG), D153, W182, and N196. 196–199 (NPPY) is a substrate binding site.

The protein belongs to the protein N5-glutamine methyltransferase family. PrmC subfamily.

It catalyses the reaction L-glutaminyl-[peptide chain release factor] + S-adenosyl-L-methionine = N(5)-methyl-L-glutaminyl-[peptide chain release factor] + S-adenosyl-L-homocysteine + H(+). In terms of biological role, methylates the class 1 translation termination release factors RF1/PrfA and RF2/PrfB on the glutamine residue of the universally conserved GGQ motif. The protein is Release factor glutamine methyltransferase of Agrobacterium fabrum (strain C58 / ATCC 33970) (Agrobacterium tumefaciens (strain C58)).